A 562-amino-acid chain; its full sequence is Potassium-transporting ATPase potassium-binding subunit (562 aa).

10 helical membrane passes run 5 to 25, 63 to 83, 132 to 152, 175 to 195, 250 to 270, 279 to 299, 379 to 399, 416 to 436, 483 to 503, and 526 to 546; these read AFLL…PLGS, AAAI…LLMA, GLTV…FALI, LYVL…QGVL, LSNI…CFAF, QGHA…AVVM, GLYG…LMIG, MTAL…ALAL, VLLA…VLAI, and LFIG…FIPA.

The protein belongs to the KdpA family. The system is composed of three essential subunits: KdpA, KdpB and KdpC.

The protein localises to the cell inner membrane. Functionally, part of the high-affinity ATP-driven potassium transport (or Kdp) system, which catalyzes the hydrolysis of ATP coupled with the electrogenic transport of potassium into the cytoplasm. This subunit binds the periplasmic potassium ions and delivers the ions to the membrane domain of KdpB through an intramembrane tunnel. This Pectobacterium atrosepticum (strain SCRI 1043 / ATCC BAA-672) (Erwinia carotovora subsp. atroseptica) protein is Potassium-transporting ATPase potassium-binding subunit.